The following is a 957-amino-acid chain: SH3 domain-binding protein 4-A (957 aa).

An SH3 1 domain is found at 54–113; the sequence is ENVKEVVAIKDYCPNNFTTLKFSKGEHLYVLDASGGDWWYAHNSTEMGYIPSSYVQPLNY. One can recognise a ZU5 domain in the interval 312 to 449; that stretch reads TSIVCRLDSS…LEPVMYVVMV (138 aa). Positions 649-719 constitute an SH3 2 domain; sequence TSLKYGKLLK…HAKNVLVVGK (71 aa).

As to quaternary structure, homodimer or homooligomer.

It localises to the membrane. It is found in the clathrin-coated pit. The protein localises to the cytoplasmic vesicle. Its subcellular location is the clathrin-coated vesicle. The protein resides in the nucleus. In terms of biological role, possible role in regulating endocytosis of the transferrin receptor at the plasma membrane. Alternatively, may function as a negative regulator of the amino acid-induced TOR signaling by inhibiting the formation of active Rag GTPase complexes. Preferentially binds inactive Rag GTPase complexes and prevents their interaction with the mTORC1 complex inhibiting its relocalization to lysosomes and its activation. Thereby, may indirectly regulate cell growth, proliferation and autophagy. The polypeptide is SH3 domain-binding protein 4-A (sh3bp4-a) (Xenopus laevis (African clawed frog)).